Here is a 909-residue protein sequence, read N- to C-terminus: UPF0182 protein H16_A1615 (909 aa).

Helical transmembrane passes span T16–V36, A58–L78, V114–L134, W169–G189, A205–L225, V246–A266, and A281–F301.

This sequence belongs to the UPF0182 family.

It is found in the cell membrane. This chain is UPF0182 protein H16_A1615, found in Cupriavidus necator (strain ATCC 17699 / DSM 428 / KCTC 22496 / NCIMB 10442 / H16 / Stanier 337) (Ralstonia eutropha).